A 91-amino-acid polypeptide reads, in one-letter code: MQITDVRIRKIASEGKMKGIVSVTFDNEFVVHDIKVIEGQMGLFIAMPSRKTPDGEFKDIAHPINTEAREKIQTAILEAYEKAVSEEVVEG.

Belongs to the SpoVG family.

Its function is as follows. Could be involved in septation. This is Putative septation protein SpoVG from Clostridium beijerinckii (strain ATCC 51743 / NCIMB 8052) (Clostridium acetobutylicum).